We begin with the raw amino-acid sequence, 421 residues long: Inhibitor of growth protein 3 (421 aa).

Positions 129–164 are disordered; it reads PSQPVNNHHAHSHTPVEKRKYNPTSHHTATDHIPEK. Glycyl lysine isopeptide (Lys-Gly) (interchain with G-Cter in SUMO2) cross-links involve residues K148, K165, and K167. Position 181 is an N6-acetyllysine (K181). K256 is covalently cross-linked (Glycyl lysine isopeptide (Lys-Gly) (interchain with G-Cter in SUMO2)). N6-acetyllysine is present on K264. Positions 286 to 324 are disordered; sequence TQNASSSAADSRSGRKSKNNTKSSSQQSSSSSSSSSSSS. Residues 308–324 show a composition bias toward low complexity; that stretch reads SSSQQSSSSSSSSSSSS. The PHD-type zinc finger occupies 363–412; that stretch reads PRYCICNQVSYGEMVGCDNQDCPIEWFHYGCVGLTEAPKGKWFCPQCTAA. Zn(2+) contacts are provided by C366, C368, C379, C384, H390, C393, C406, and C409.

The protein belongs to the ING family. In terms of assembly, interacts with H3K4me3 and to a lesser extent with H3K4me2. Component of the NuA4 histone acetyltransferase complex which contains the catalytic subunit KAT5/TIP60 and the subunits EP400, TRRAP/PAF400, BRD8/SMAP, EPC1, DMAP1/DNMAP1, RUVBL1/TIP49, RUVBL2, ING3, actin, ACTL6A/BAF53A, MORF4L1/MRG15, MORF4L2/MRGX, MRGBP, YEATS4/GAS41, VPS72/YL1 and MEAF6. The NuA4 complex interacts with MYC. HTATTIP/TIP60, EPC1, and ING3 together constitute a minimal HAT complex termed Piccolo NuA4. Component of a SWR1-like complex.

The protein resides in the nucleus. In terms of biological role, component of the NuA4 histone acetyltransferase (HAT) complex which is involved in transcriptional activation of select genes principally by acetylation of nucleosomal histones H4 and H2A. This modification may both alter nucleosome - DNA interactions and promote interaction of the modified histones with other proteins which positively regulate transcription. This complex may be required for the activation of transcriptional programs associated with oncogene and proto-oncogene mediated growth induction, tumor suppressor mediated growth arrest and replicative senescence, apoptosis, and DNA repair. NuA4 may also play a direct role in DNA repair when directly recruited to sites of DNA damage. Component of a SWR1-like complex that specifically mediates the removal of histone H2A.Z/H2AZ1 from the nucleosome. This Rattus norvegicus (Rat) protein is Inhibitor of growth protein 3 (Ing3).